The following is a 340-amino-acid chain: Olfactory receptor 5T3 (340 aa).

The Extracellular portion of the chain corresponds to 1-55 (MDSTFTGYNLYNLQVKTEMDKLSSGLDIYRNPLKNKTEVTMFILTGFTDDFELQV). An N-linked (GlcNAc...) asparagine glycan is attached at N35. Residues 56-76 (FLFLLFFAIYLFTLIGNLGLV) form a helical membrane-spanning segment. Topologically, residues 77–84 (VLVIEDSW) are cytoplasmic. Residues 85 to 105 (LHNPMYYFLSVLSFLDACYST) form a helical membrane-spanning segment. Over 106 to 129 (VVTPKMLVNFLAKNKSISFIGCAT) the chain is Extracellular. N-linked (GlcNAc...) asparagine glycosylation occurs at N119. Cysteines 127 and 219 form a disulfide. A helical membrane pass occupies residues 130–150 (QMLLFVTFGTTECFLLAAMAY). Residues 151 to 169 (DHYVAIYNPLLYSVSMSPR) lie on the Cytoplasmic side of the membrane. A helical transmembrane segment spans residues 170–190 (VYVPLITASYVAGILHATIHI). The Extracellular portion of the chain corresponds to 191–226 (VATFSLSFCGSNEIRHVFCDMPPLLAISCSDTHTNQ). A helical membrane pass occupies residues 227-247 (LLLFYFVGSIEIVTILIVLIS). Residues 248-267 (CDFILLSILKMHSAKGRQKA) are Cytoplasmic-facing. Residues 268–288 (FSTCGSHLTGVTIYHGTILVS) traverse the membrane as a helical segment. At 289–301 (YMRPSSSYASDHD) the chain is on the extracellular side. The chain crosses the membrane as a helical span at residues 302 to 322 (IIVSIFYTIVIPKLNPIIYSL). Topologically, residues 323–340 (RNKEVKKAVKKMLKLVYK) are cytoplasmic.

This sequence belongs to the G-protein coupled receptor 1 family.

It localises to the cell membrane. In terms of biological role, odorant receptor. The chain is Olfactory receptor 5T3 (OR5T3) from Homo sapiens (Human).